A 149-amino-acid chain; its full sequence is Myoglobin (149 aa).

The residue at position 2 (Val2) is an N-acetylvaline. The region spanning Val2 to Lys143 is the Globin domain. Heme b is bound at residue His89.

Belongs to the globin family. In terms of assembly, monomeric.

The protein localises to the cytoplasm. It is found in the sarcoplasm. It catalyses the reaction Fe(III)-heme b-[protein] + nitric oxide + H2O = Fe(II)-heme b-[protein] + nitrite + 2 H(+). It carries out the reaction H2O2 + AH2 = A + 2 H2O. In terms of biological role, monomeric heme protein which primary function is to store oxygen and facilitate its diffusion within muscle tissues. Reversibly binds oxygen through a pentacoordinated heme iron and enables its timely and efficient release as needed during periods of heightened demand. Depending on the oxidative conditions of tissues and cells, and in addition to its ability to bind oxygen, it also has a nitrite reductase activity whereby it regulates the production of bioactive nitric oxide. Under stress conditions, like hypoxia and anoxia, it also protects cells against reactive oxygen species thanks to its pseudoperoxidase activity. This Mustelus antarcticus (Gummy shark) protein is Myoglobin (mb).